Reading from the N-terminus, the 539-residue chain is Chaperonin GroEL 1 (539 aa).

ATP is bound by residues 29-32 (TLGP), 86-90 (DGTTT), G413, 478-480 (NAA), and D494.

It belongs to the chaperonin (HSP60) family. In terms of assembly, forms a cylinder of 14 subunits composed of two heptameric rings stacked back-to-back. Interacts with the co-chaperonin GroES.

The protein localises to the cytoplasm. It carries out the reaction ATP + H2O + a folded polypeptide = ADP + phosphate + an unfolded polypeptide.. Its function is as follows. Together with its co-chaperonin GroES, plays an essential role in assisting protein folding. The GroEL-GroES system forms a nano-cage that allows encapsulation of the non-native substrate proteins and provides a physical environment optimized to promote and accelerate protein folding. This is Chaperonin GroEL 1 from Corynebacterium diphtheriae (strain ATCC 700971 / NCTC 13129 / Biotype gravis).